Here is a 285-residue protein sequence, read N- to C-terminus: Short chain dehydrogenase sol3 (285 aa).

Residues Leu39, Lys64, and Asp87 each coordinate NADP(+). Residues Ser168 and Tyr200 each act as proton donor in the active site. Positions 200, 204, and 234 each coordinate NADP(+). The active-site Lowers pKa of active site Tyr is Lys204.

It belongs to the short-chain dehydrogenases/reductases (SDR) family.

The protein operates within phytotoxin biosynthesis. Its function is as follows. Short chain dehydrogenase; part of the gene cluster that mediates the biosynthesis of the phytotoxin solanapyrone, a causal agent of early blight disease of potato and tomato. The prosolanapyrone synthase sol1 is a polyketide synthase that produces the octaketide desmethylprosolanapyrone I via sequential condensations of 7 malonyl-CoA units with one acetyl-CoA unit, and one methylation step. The octaketide backbone is further methylated by the sol2 O-methyltransferase to yield prosolanapyrone I. Prosolanapyrone I is hydroxylated to prosolanapyrone II by the cytochrome P450 monooxygenase sol6. The solanapyrone synthase sol5 then catalyzes the oxidation of prosolanapyrone II and the subsequent Diels Alder cycloisomerization of the product prosolanapyrone III to solanapyrones A and D. Solanapyrones A and D are then converted into solanapyrones B and E, respectively, by the sol3 dehydrogenase. The chain is Short chain dehydrogenase sol3 (sol3) from Alternaria solani.